Here is an 86-residue protein sequence, read N- to C-terminus: Putative regulatory protein BBR47_37350 (86 aa).

The protein belongs to the RemA family.

The sequence is that of Putative regulatory protein BBR47_37350 from Brevibacillus brevis (strain 47 / JCM 6285 / NBRC 100599).